A 1217-amino-acid polypeptide reads, in one-letter code: Genetic suppressor element 1 (1217 aa).

Residues 1–155 (MKGMSHEPKS…SRSSSGGRER (155 aa)) form a disordered region. Phosphoserine is present on S10. Positions 15 to 33 (MLSTATRTTATVNPLTPSP) are enriched in polar residues. Composition is skewed to low complexity over residues 43 to 63 (SPATSSALSAQAAPSSSFAAA) and 76 to 89 (GSSLSSESSPVSSP). S84 and S95 each carry phosphoserine. The span at 103–114 (VPMGPIIVPPGG) shows a compositional bias: low complexity. At R305 the chain carries Asymmetric dimethylarginine. The stretch at 321 to 403 (ERMSGLSAER…REKELLAAKA (83 aa)) forms a coiled coil. 2 disordered regions span residues 324–385 (SGLS…EREL) and 418–465 (RGHA…HHTV). Over residues 331–385 (LQMDEELRREREREREREREREADREREKEREREREKEREQEKEREREKEREREL) the composition is skewed to basic and acidic residues. T433 bears the Phosphothreonine mark. Low complexity predominate over residues 450 to 465 (PVQHPLHPVPTPHHTV). N6-acetyllysine is present on K496. 3 disordered regions span residues 526-579 (HLDM…QLHA), 633-675 (KAEE…GPFL), and 699-720 (FGELSGPLKPGSPYRPPVPRAP). Composition is skewed to basic and acidic residues over residues 551–561 (NRHEPGGRDPP) and 633–645 (KAEEGPRKREPAP). Residues 711–720 (PYRPPVPRAP) are compositionally biased toward pro residues. K739 is subject to N6-acetyllysine. S766 bears the Phosphoserine mark. Disordered regions lie at residues 807–858 (KEEL…NNSP), 903–930 (ADSLTNSPRDSPAVSLSEPATQQASLDV), 948–981 (EPGKLEQVRPQELSRVQELAPASGEKARLSEAPG), and 1068–1122 (LQSS…PKRK). A compositionally biased stretch (basic residues) spans 813-822 (QKRRKRRRML). 2 positions are modified to phosphoserine: S826 and S828. Polar residues-rich tracts occupy residues 831–840 (TIQSKRQTPS) and 847–858 (TRYSPDEMNNSP). A Phosphoserine modification is found at S857. T907 bears the Phosphothreonine mark. S909 carries the phosphoserine modification. Over residues 1068–1085 (LQSSSRAPPPQHNGQQEP) the composition is skewed to polar residues. Residues 1099 to 1117 (RDSEEEEEEDDEDGEDEEE) are compositionally biased toward acidic residues. Position 1101 is a phosphoserine (S1101). The stretch at 1127–1201 (EAVFEAYQEH…ELDHLRKCLA (75 aa)) forms a coiled coil.

May be a component of a BHC histone deacetylase complex that contains HDAC1, HDAC2, HMG20B/BRAF35, KDM1A, RCOR1/CoREST, PHF21A/BHC80, ZMYM2, ZNF217, ZMYM3, GSE1 and GTF2I.

The chain is Genetic suppressor element 1 (GSE1) from Homo sapiens (Human).